We begin with the raw amino-acid sequence, 139 residues long: 3-hydroxyacyl-[acyl-carrier-protein] dehydratase FabZ (139 aa).

The active site involves histidine 47.

It belongs to the thioester dehydratase family. FabZ subfamily.

It is found in the cytoplasm. It catalyses the reaction a (3R)-hydroxyacyl-[ACP] = a (2E)-enoyl-[ACP] + H2O. Involved in unsaturated fatty acids biosynthesis. Catalyzes the dehydration of short chain beta-hydroxyacyl-ACPs and long chain saturated and unsaturated beta-hydroxyacyl-ACPs. This is 3-hydroxyacyl-[acyl-carrier-protein] dehydratase FabZ from Oenococcus oeni (strain ATCC BAA-331 / PSU-1).